Consider the following 240-residue polypeptide: Uridylate kinase (240 aa).

12–15 (KLSG) contributes to the ATP binding site. An involved in allosteric activation by GTP region spans residues 20-25 (GEDGFG). Residue Gly54 participates in UMP binding. The ATP site is built by Gly55 and Arg59. Residues Asp74 and 135 to 142 (TGNPYFST) each bind UMP. ATP contacts are provided by Asn163, Tyr169, and Asp172.

The protein belongs to the UMP kinase family. In terms of assembly, homohexamer.

Its subcellular location is the cytoplasm. It carries out the reaction UMP + ATP = UDP + ADP. Its pathway is pyrimidine metabolism; CTP biosynthesis via de novo pathway; UDP from UMP (UMPK route): step 1/1. With respect to regulation, allosterically activated by GTP. Probably inhibited by UTP. Functionally, catalyzes the reversible phosphorylation of UMP to UDP. The chain is Uridylate kinase (pyrH) from Enterococcus faecalis (strain ATCC 700802 / V583).